The sequence spans 345 residues: Lysine-specific demethylase JMJ32 (345 aa).

The JmjC domain maps to 122-315; it reads GYLQQQNDCF…IKYAYFNFLQ (194 aa). Positions 174, 176, and 281 each coordinate Fe cation.

The protein belongs to the JARID1 histone demethylase family. Requires Fe(2+) as cofactor. As to expression, expressed ubiquitously including in vasculatures, leaves, siliques, roots and inflorescences. Present in the root meristem. Accumulates in cotyledons and root tips of young seedlings.

Its subcellular location is the nucleus. The protein localises to the cytoplasm. It localises to the endoplasmic reticulum. It catalyses the reaction N(6),N(6),N(6)-trimethyl-L-lysyl(27)-[histone H3] + 2-oxoglutarate + O2 = N(6),N(6)-dimethyl-L-lysyl(27)-[histone H3] + formaldehyde + succinate + CO2. The enzyme catalyses N(6),N(6)-dimethyl-L-lysyl(27)-[histone H3] + 2-oxoglutarate + O2 = N(6)-methyl-L-lysyl(27)-[histone H3] + formaldehyde + succinate + CO2. It carries out the reaction N(6),N(6),N(6)-trimethyl-L-lysyl(27)-[histone H3] + 2 2-oxoglutarate + 2 O2 = N(6)-methyl-L-lysyl(27)-[histone H3] + 2 formaldehyde + 2 succinate + 2 CO2. Functionally, histone demethylase that demethylates 'Lys-27' (H3K27me) of histone H3 with a specific activity for H3K27me3 and H3K27me2, and involved in the regulation of gene expression. No activity on H3K27me1. Together with JMJ30, regulates the flowering-repressor FLOWERING LOCUS C (FLC) locus by removing the repressive histone modification H3 lysine 27 trimethylation (H3K27me3), especially at elevated temperatures (e.g. 29 degrees Celsius), thus preventing extreme precocious flowering. JMJ30 and JMJ32 are regulators involved in the integration of abscisic acid (ABA) and brassinosteroids (BR) signaling pathways. Together with JMJ30, controls ABA-mediated growth arrest during the post-germination stage in unfavorable conditions, and responses to ABA during root development, via the removal of repressive histone mark (H3K27me3) from the SnRK2.8 promoter, thus promoting SnRK2.8 expression and subsequent kinase-dependent ABI3 activation. In addition, removes the repressive histone marks (H3K27me3) from the BZR1 locus in response to stress and ABA, thus activating the BR signaling pathway which, in turn, inhibits the ABA signaling pathway. The sequence is that of Lysine-specific demethylase JMJ32 from Arabidopsis thaliana (Mouse-ear cress).